A 198-amino-acid polypeptide reads, in one-letter code: Peptidyl-tRNA hydrolase (198 aa).

TRNA is bound at residue Tyr14. His19 serves as the catalytic Proton acceptor. TRNA contacts are provided by Tyr64, Asn66, and Asn112.

Belongs to the PTH family. As to quaternary structure, monomer.

Its subcellular location is the cytoplasm. The catalysed reaction is an N-acyl-L-alpha-aminoacyl-tRNA + H2O = an N-acyl-L-amino acid + a tRNA + H(+). Hydrolyzes ribosome-free peptidyl-tRNAs (with 1 or more amino acids incorporated), which drop off the ribosome during protein synthesis, or as a result of ribosome stalling. In terms of biological role, catalyzes the release of premature peptidyl moieties from peptidyl-tRNA molecules trapped in stalled 50S ribosomal subunits, and thus maintains levels of free tRNAs and 50S ribosomes. The sequence is that of Peptidyl-tRNA hydrolase from Beijerinckia indica subsp. indica (strain ATCC 9039 / DSM 1715 / NCIMB 8712).